Reading from the N-terminus, the 454-residue chain is UPF0210 protein BAD_1323 (454 aa).

It belongs to the UPF0210 family. Homodimer.

This is UPF0210 protein BAD_1323 from Bifidobacterium adolescentis (strain ATCC 15703 / DSM 20083 / NCTC 11814 / E194a).